We begin with the raw amino-acid sequence, 154 residues long: Large ribosomal subunit protein uL13 (154 aa).

This sequence belongs to the universal ribosomal protein uL13 family. As to quaternary structure, part of the 50S ribosomal subunit.

Its function is as follows. This protein is one of the early assembly proteins of the 50S ribosomal subunit, although it is not seen to bind rRNA by itself. It is important during the early stages of 50S assembly. In Rhizobium rhizogenes (strain K84 / ATCC BAA-868) (Agrobacterium radiobacter), this protein is Large ribosomal subunit protein uL13.